Consider the following 278-residue polypeptide: Tryptophan synthase alpha chain (278 aa).

Active-site proton acceptor residues include Glu49 and Asp60.

It belongs to the TrpA family. Tetramer of two alpha and two beta chains.

The enzyme catalyses (1S,2R)-1-C-(indol-3-yl)glycerol 3-phosphate + L-serine = D-glyceraldehyde 3-phosphate + L-tryptophan + H2O. It functions in the pathway amino-acid biosynthesis; L-tryptophan biosynthesis; L-tryptophan from chorismate: step 5/5. The alpha subunit is responsible for the aldol cleavage of indoleglycerol phosphate to indole and glyceraldehyde 3-phosphate. The polypeptide is Tryptophan synthase alpha chain (Rhodopirellula baltica (strain DSM 10527 / NCIMB 13988 / SH1)).